A 101-amino-acid polypeptide reads, in one-letter code: UPF0235 protein Cpha266_2081 (101 aa).

The protein belongs to the UPF0235 family.

This chain is UPF0235 protein Cpha266_2081, found in Chlorobium phaeobacteroides (strain DSM 266 / SMG 266 / 2430).